Consider the following 135-residue polypeptide: ATP synthase epsilon chain (135 aa).

Belongs to the ATPase epsilon chain family. As to quaternary structure, F-type ATPases have 2 components, CF(1) - the catalytic core - and CF(0) - the membrane proton channel. CF(1) has five subunits: alpha(3), beta(3), gamma(1), delta(1), epsilon(1). CF(0) has three main subunits: a, b and c.

The protein localises to the cell inner membrane. Its function is as follows. Produces ATP from ADP in the presence of a proton gradient across the membrane. This is ATP synthase epsilon chain from Rhizobium etli (strain CIAT 652).